Consider the following 320-residue polypeptide: 3-oxoacyl-[acyl-carrier-protein] reductase 1, chloroplastic (320 aa).

The transit peptide at 1 to 60 directs the protein to the chloroplast; sequence MATTVAATKLTSLKAVKKLGFREIRQVRQWSPLQSAMPHFGMLRCGSRQSFATSTVVKAQ. Position 82–106 (82–106) interacts with NADP(+); sequence VTGASRGIGKAIALSLGKAGCKVLV. Ser214 lines the substrate pocket. Tyr227 (proton acceptor) is an active-site residue.

Belongs to the short-chain dehydrogenases/reductases (SDR) family. Homotetramer.

Its subcellular location is the plastid. The protein resides in the chloroplast. It carries out the reaction a (3R)-hydroxyacyl-[ACP] + NADP(+) = a 3-oxoacyl-[ACP] + NADPH + H(+). Its pathway is lipid metabolism; fatty acid biosynthesis. This Brassica napus (Rape) protein is 3-oxoacyl-[acyl-carrier-protein] reductase 1, chloroplastic (gbkr1).